Reading from the N-terminus, the 344-residue chain is MQTKIKNLTTQFHTSLQKNKHDLDQLMTLDKEFLGKKGILFELTQELKSLPHAQKAVAGKLINVLKQEIILTLQKEKEILQRNQLNAKLLQEEIDPTLPGLKFFQGSAHPLNQIIEQIEDLFLSLGYEIKEGNEIETDFYNFEMLNMGKGHPARAMQDSFYIDPQKLLRTHTSNVQVKEMKARQGGPLKIISPGKVYRKDDDDATHSHQFMQLEGLVIDKNINFSHLKETLLLITKELFGTSQEIHLRPSYFPFTEPSIEVDLVITKKDGTKEYLEILGAGLVHPQVLKNANYDPEKYQGFAFGIGIERIAMIKYQIDNIRHFYTNDIRFLKQFARNTTNNENY.

E256 is a binding site for Mg(2+).

The protein belongs to the class-II aminoacyl-tRNA synthetase family. Phe-tRNA synthetase alpha subunit type 1 subfamily. In terms of assembly, tetramer of two alpha and two beta subunits. Mg(2+) is required as a cofactor.

The protein localises to the cytoplasm. It catalyses the reaction tRNA(Phe) + L-phenylalanine + ATP = L-phenylalanyl-tRNA(Phe) + AMP + diphosphate + H(+). This chain is Phenylalanine--tRNA ligase alpha subunit, found in Onion yellows phytoplasma (strain OY-M).